The following is a 321-amino-acid chain: Probable endolytic peptidoglycan transglycosylase RlpA (321 aa).

It belongs to the RlpA family.

Functionally, lytic transglycosylase with a strong preference for naked glycan strands that lack stem peptides. In Synechocystis sp. (strain ATCC 27184 / PCC 6803 / Kazusa), this protein is Probable endolytic peptidoglycan transglycosylase RlpA.